A 364-amino-acid chain; its full sequence is Fructose-bisphosphate aldolase A (364 aa).

Residue Tyr-5 is modified to Phosphotyrosine. Residue Thr-9 is modified to Phosphothreonine. Phosphoserine occurs at positions 36 and 39. Lys-42 is modified (N6-acetyllysine; alternate). Lys-42 participates in a covalent cross-link: Glycyl lysine isopeptide (Lys-Gly) (interchain with G-Cter in SUMO1); alternate. A Glycyl lysine isopeptide (Lys-Gly) (interchain with G-Cter in SUMO2); alternate cross-link involves residue Lys-42. Arg-43 provides a ligand contact to beta-D-fructose 1,6-bisphosphate. Phosphoserine is present on Ser-46. Lys-99 is subject to N6-(2-hydroxyisobutyryl)lysine. Lys-108 is subject to N6-acetyllysine. Lys-111 carries the N6-acetyllysine; alternate modification. An N6-malonyllysine; alternate modification is found at Lys-111. Position 132 is a phosphoserine (Ser-132). Lys-147 bears the N6-(2-hydroxyisobutyryl)lysine mark. Glu-188 functions as the Proton acceptor in the catalytic mechanism. Lys-230 serves as the catalytic Schiff-base intermediate with dihydroxyacetone-P. Phosphoserine is present on Ser-272. Beta-D-fructose 1,6-bisphosphate is bound by residues 272–274 (SGG), Ser-301, and Arg-304. Lys-312 is modified (N6-malonyllysine). Lys-330 is subject to N6-acetyllysine.

The protein belongs to the class I fructose-bisphosphate aldolase family. As to quaternary structure, homotetramer. Interacts with SNX9 and WAS. Interacts with FBP2; the interaction blocks FBP2 inhibition by physiological concentrations of AMP and reduces inhibition by Ca(2+). Expressed in muscle, brain and hepatoma cells.

It is found in the cytoplasm. It localises to the myofibril. The protein localises to the sarcomere. Its subcellular location is the i band. The protein resides in the m line. The catalysed reaction is beta-D-fructose 1,6-bisphosphate = D-glyceraldehyde 3-phosphate + dihydroxyacetone phosphate. Its pathway is carbohydrate degradation; glycolysis; D-glyceraldehyde 3-phosphate and glycerone phosphate from D-glucose: step 4/4. Catalyzes the reversible conversion of beta-D-fructose 1,6-bisphosphate (FBP) into two triose phosphate and plays a key role in glycolysis and gluconeogenesis. In addition, may also function as scaffolding protein. In Rattus norvegicus (Rat), this protein is Fructose-bisphosphate aldolase A (Aldoa).